Consider the following 435-residue polypeptide: Nuclear receptor subfamily 6 group A member 1 (435 aa).

The nuclear receptor DNA-binding region spans glutamine 11 to glutamate 86. 2 consecutive NR C4-type zinc fingers follow at residues cysteine 14–cysteine 34 and cysteine 50–cysteine 69. The interval isoleucine 84–glutamate 158 is disordered. Over residues asparagine 121 to glutamate 141 the composition is skewed to polar residues. Positions serine 142 to serine 156 are enriched in low complexity. In terms of domain architecture, NR LBD spans glutamine 204–glutamate 435.

This sequence belongs to the nuclear hormone receptor family. NR6 subfamily. As to quaternary structure, homodimer. As to expression, transiently expressed in differentiating cells of all embryonic germ layers. Expressed in an anterior to posterior concentration gradient from late gastrula to midneurula stages. Shows a complicated spatio-temporal pattern of expression during neurulation, being predominant in the neural plate and neural crest in midneurula embryos. At late tailbud (stage 30), mainly expressed in the head mesenchyme, gill arches and tail tip. Expression persists in the epidermis, somites and endoderm, and in the central nervous system, expression is restricted to the midbrain, hindbrain and part of the spinal cord. Isoforms Oo and Em are both expressed in the brain and isoform Oo is expressed in the germ cells of both the adult testis and ovary.

Its subcellular location is the cytoplasm. It is found in the nucleus. Functionally, probable orphan nuclear receptor. Binds to a response element containing repeats of the motif 5'-AGGTCA-3'. Required for anterior-posterior patterning during organogenesis. Acts with chordin to play a role in patterning the midbrain-hindbrain. Isoform Em is required for integrin-mediated cell matrix interaction during neurulation and for the morphogenetic movements leading to formation of the neural tube. Also mediates the effect of retinoic acid on primary neurogenesis. In Xenopus laevis (African clawed frog), this protein is Nuclear receptor subfamily 6 group A member 1.